A 414-amino-acid polypeptide reads, in one-letter code: Bystin (414 aa).

Basic residues predominate over residues 1–11 (MSAKRNTKLRH). A disordered region spans residues 1 to 91 (MSAKRNTKLR…PSDDEGQADD (91 aa)). Basic and acidic residues predominate over residues 12 to 24 (APLEHAYVDDKSV). Basic residues predominate over residues 25–34 (RRNKRSKQRG).

It belongs to the bystin family.

The protein localises to the nucleus. It localises to the nucleolus. Required for processing of 20S pre-rRNA precursor and biogenesis of 40S ribosomal subunits. The polypeptide is Bystin (bysl) (Monosiga brevicollis (Choanoflagellate)).